Consider the following 256-residue polypeptide: Fat body protein 2 (256 aa).

10–34 is an NAD(+) binding site; sequence VYVGSFSGIGWQMMMQLMQKDIKMM. S138 contributes to the substrate binding site. Y151 acts as the Proton acceptor in catalysis.

It belongs to the short-chain dehydrogenases/reductases (SDR) family.

This Drosophila melanogaster (Fruit fly) protein is Fat body protein 2 (Fbp2).